Reading from the N-terminus, the 873-residue chain is Probable inorganic carbon transporter subunit DabA (873 aa).

Cys393, Asp395, His575, and Cys590 together coordinate Zn(2+).

Belongs to the inorganic carbon transporter (TC 9.A.2) DabA family. Forms a complex with DabB. Zn(2+) is required as a cofactor.

The protein resides in the cell membrane. In terms of biological role, part of an energy-coupled inorganic carbon pump. The sequence is that of Probable inorganic carbon transporter subunit DabA from Bacillus licheniformis (strain ATCC 14580 / DSM 13 / JCM 2505 / CCUG 7422 / NBRC 12200 / NCIMB 9375 / NCTC 10341 / NRRL NRS-1264 / Gibson 46).